We begin with the raw amino-acid sequence, 469 residues long: Glutamate--tRNA ligase (469 aa).

A 'HIGH' region motif is present at residues 11-21 (PSPTGFIHLGN). Over residues 121–131 (PRYDGTWRPEP) the composition is skewed to basic and acidic residues. A disordered region spans residues 121 to 141 (PRYDGTWRPEPGKVLPEPPPG). Positions 243-247 (KMSKR) match the 'KMSKS' region motif. Lysine 246 is a binding site for ATP.

The protein belongs to the class-I aminoacyl-tRNA synthetase family. Glutamate--tRNA ligase type 1 subfamily. As to quaternary structure, monomer.

The protein resides in the cytoplasm. It catalyses the reaction tRNA(Glu) + L-glutamate + ATP = L-glutamyl-tRNA(Glu) + AMP + diphosphate. Functionally, catalyzes the attachment of glutamate to tRNA(Glu) in a two-step reaction: glutamate is first activated by ATP to form Glu-AMP and then transferred to the acceptor end of tRNA(Glu). In Burkholderia multivorans (strain ATCC 17616 / 249), this protein is Glutamate--tRNA ligase.